Here is a 349-residue protein sequence, read N- to C-terminus: GTP 3',8-cyclase (349 aa).

One can recognise a Radical SAM core domain in the interval 26–245; that stretch reads GFGRAVTYLR…SSFWTLTDIP (220 aa). Residue Arg35 coordinates GTP. [4Fe-4S] cluster contacts are provided by Cys42 and Cys46. An S-adenosyl-L-methionine-binding site is contributed by Tyr48. A [4Fe-4S] cluster-binding site is contributed by Cys49. GTP is bound at residue Arg84. Gly88 contacts S-adenosyl-L-methionine. Residue Thr118 participates in GTP binding. Ser142 provides a ligand contact to S-adenosyl-L-methionine. Residue Lys178 participates in GTP binding. An S-adenosyl-L-methionine-binding site is contributed by Met212. [4Fe-4S] cluster is bound by residues Cys275 and Cys278. Residue 280–282 participates in GTP binding; the sequence is RVR. Cys292 is a [4Fe-4S] cluster binding site.

This sequence belongs to the radical SAM superfamily. MoaA family. Monomer and homodimer. [4Fe-4S] cluster serves as cofactor.

It catalyses the reaction GTP + AH2 + S-adenosyl-L-methionine = (8S)-3',8-cyclo-7,8-dihydroguanosine 5'-triphosphate + 5'-deoxyadenosine + L-methionine + A + H(+). It functions in the pathway cofactor biosynthesis; molybdopterin biosynthesis. Its function is as follows. Catalyzes the cyclization of GTP to (8S)-3',8-cyclo-7,8-dihydroguanosine 5'-triphosphate. The sequence is that of GTP 3',8-cyclase from Caulobacter vibrioides (strain ATCC 19089 / CIP 103742 / CB 15) (Caulobacter crescentus).